Here is a 105-residue protein sequence, read N- to C-terminus: Guanidinium exporter (105 aa).

A topological domain (cytoplasmic) is located at residue methionine 1. The chain crosses the membrane as a helical span at residues 2-19; that stretch reads SWIVLLIAGLLEVVWAIG. Residues 20–28 are Periplasmic-facing; that stretch reads LKYTHGFTR. Residues 29-48 traverse the membrane as a helical segment; it reads LTPSIITIAAMIVSIAMLSW. Residues 49-54 lie on the Cytoplasmic side of the membrane; sequence AMRTLP. Residues 55–77 form a helical membrane-spanning segment; it reads VGTAYAVWTGIGAVGAAITGILL. Residues 78–86 are Periplasmic-facing; sequence LGESASPAR. Residues 87-104 form a helical membrane-spanning segment; that stretch reads LLSLGLIVAGIIGLKLST. Residue histidine 105 is a topological domain, cytoplasmic.

The protein belongs to the drug/metabolite transporter (DMT) superfamily. Small multidrug resistance (SMR) (TC 2.A.7.1) family. Gdx/SugE subfamily.

The protein localises to the cell inner membrane. In terms of biological role, guanidinium ion exporter. Couples guanidinium export to the proton motive force, exchanging one guanidinium ion for two protons. This is Guanidinium exporter from Citrobacter freundii.